Reading from the N-terminus, the 344-residue chain is 4-hydroxy-2-oxovalerate aldolase (344 aa).

The region spanning 8-260 (VTLHDMSLRD…NHGIDLYKIM (253 aa)) is the Pyruvate carboxyltransferase domain. Residue 16 to 17 (RD) participates in substrate binding. Position 17 (D17) interacts with Mn(2+). H20 serves as the catalytic Proton acceptor. Substrate-binding residues include S170 and H199. Mn(2+)-binding residues include H199 and H201. Residue Y290 participates in substrate binding.

The protein belongs to the 4-hydroxy-2-oxovalerate aldolase family.

It carries out the reaction (S)-4-hydroxy-2-oxopentanoate = acetaldehyde + pyruvate. The chain is 4-hydroxy-2-oxovalerate aldolase (mhpE) from Pseudoalteromonas translucida (strain TAC 125).